A 478-amino-acid chain; its full sequence is Cytochrome c-552 (478 aa).

The first 26 residues, 1–26 (MTRIKINARRIFSLLIPFFFFTSVHA), serve as a signal peptide directing secretion. H94 serves as a coordination point for heme c. Heme is bound by residues C122, C125, and K126. Heme c is bound by residues C160, C163, H164, C209, C212, and H213. Ca(2+) is bound by residues E215, Y216, K261, and Q263. Y216 contacts substrate. H264 contacts substrate. Residues H275, C282, C285, H286, H301, C314, C317, H318, and H393 each coordinate heme c.

It belongs to the cytochrome c-552 family. Ca(2+) is required as a cofactor. It depends on heme c as a cofactor.

The protein resides in the periplasm. The enzyme catalyses 6 Fe(III)-[cytochrome c] + NH4(+) + 2 H2O = 6 Fe(II)-[cytochrome c] + nitrite + 8 H(+). The protein operates within nitrogen metabolism; nitrate reduction (assimilation). In terms of biological role, catalyzes the reduction of nitrite to ammonia, consuming six electrons in the process. This is Cytochrome c-552 from Escherichia coli O17:K52:H18 (strain UMN026 / ExPEC).